The primary structure comprises 1026 residues: Multidrug resistance protein MdtC (1026 aa).

The next 11 helical transmembrane spans lie at 15 to 35, 333 to 353, 360 to 380, 387 to 407, 431 to 451, 463 to 483, 528 to 548, 853 to 873, 897 to 917, 953 to 973, and 984 to 1004; these read ILIA…LPVA, EVEE…FLFL, LIPA…MYLC, LSLM…IVVL, VGFT…PLLL, FAVT…TLTP, LVGV…IAIP, LILI…LYES, LFNA…IGIV, PIMM…LSGG, and ITIV…TPVV.

This sequence belongs to the resistance-nodulation-cell division (RND) (TC 2.A.6) family. MdtC subfamily. Part of a tripartite efflux system composed of MdtA, MdtB and MdtC. MdtC forms a heteromultimer with MdtB.

Its subcellular location is the cell inner membrane. This Salmonella arizonae (strain ATCC BAA-731 / CDC346-86 / RSK2980) protein is Multidrug resistance protein MdtC.